We begin with the raw amino-acid sequence, 239 residues long: MTSLIFKNVTMSYPIYNAHSQSLRNQLVRVSTGGRIGGSRGEVVTVTALDNISFELNSGDSVGLIGHNGAGKSTLLRTMAGIYPASSGEIIREGSVATVFELGAGMDPELSGYENIMRMLLLLGNSVASAKSKIPEIEEFCELGDFLVLPVRTYSSGMTMRLMFAVATSMRPEILLIDEMFGTGDAAFQEKAEKRMRDWIAGSDIFVFASHDRSLIKKLCNRIFRLEHGLIYEESMDIL.

Residues 28–239 (VRVSTGGRIG…LIYEESMDIL (212 aa)) enclose the ABC transporter domain. 66–73 (GHNGAGKS) provides a ligand contact to ATP.

It belongs to the ABC transporter superfamily.

Its subcellular location is the cell inner membrane. In terms of biological role, may form an ATP-driven O-antigen export apparatus, in association with RfbD. The sequence is that of O-antigen export system ATP-binding protein RfbE (rfbE) from Yersinia enterocolitica.